Consider the following 266-residue polypeptide: MNYQLFKHSDENASYVVFSSGLGGHGSFWQAQLDVFRQYFHVLIYDQEGCHASSELLADGYSFEHLALQVKQLLQQLNIVRFHFIGHALGGFIGIELAHRYASETCQLLSLTLINAWQQLDPHTLRCFTTRIALLQHAGTAAYLHAQALFLYPPLWISEHTALLEQQEAKMQSDFPPHANVLKRLNALMQYQVNTARIDTLKQLPVCLIANQDDMLVPYVQSLNLWKKLPDAQLKLLPYGGHASTVTEARQVNQLMLDFLKTSAPT.

The protein belongs to the AB hydrolase superfamily. Hydrolase RutD family.

The catalysed reaction is carbamate + 2 H(+) = NH4(+) + CO2. In terms of biological role, involved in pyrimidine catabolism. May facilitate the hydrolysis of carbamate, a reaction that can also occur spontaneously. The sequence is that of Putative carbamate hydrolase RutD from Acinetobacter baylyi (strain ATCC 33305 / BD413 / ADP1).